We begin with the raw amino-acid sequence, 190 residues long: Protein E6C (190 aa).

The segment covering 1–15 has biased composition (pro residues); that stretch reads MFGVAKPPPSPIPKP. 2 disordered regions span residues 1-110 and 160-190; these read MFGV…EGRR and PRTP…PPDD. Positions 36-46 are enriched in basic residues; that stretch reads ARQRASTRHRP. 2 stretches are compositionally biased toward pro residues: residues 162 to 171 and 181 to 190; these read TPGPVAPIPE and TRTPPPPPDD.

This Equus caballus (Horse) protein is Protein E6C (13).